The primary structure comprises 352 residues: Inorganic triphosphatase (352 aa).

Residues 6 to 203 form the CYTH domain; sequence LQEIELKLAI…KRGYLLGSKQ (198 aa).

It carries out the reaction triphosphate + H2O = phosphate + diphosphate. Involved in the hydrolysis of the beta-gamma-phosphoanhydride linkage of triphosphate-containing substrates (inorganic or nucleoside-linked). Catalyzes the hydrolysis of inorganic triphosphate (PPPi), which could be cytotoxic because of its high affinity for calcium ion, thereby interfering with calcium signaling. This is Inorganic triphosphatase from Haemophilus influenzae (strain ATCC 51907 / DSM 11121 / KW20 / Rd).